We begin with the raw amino-acid sequence, 459 residues long: Cysteine--tRNA ligase (459 aa).

Cysteine 27 is a binding site for Zn(2+). A 'HIGH' region motif is present at residues 29 to 39 (PTVYDDAHLGH). Zn(2+) contacts are provided by cysteine 202, histidine 231, and glutamate 235. A 'KMSKS' region motif is present at residues 263–267 (KMSKS). Lysine 266 provides a ligand contact to ATP.

Belongs to the class-I aminoacyl-tRNA synthetase family. In terms of assembly, monomer. The cofactor is Zn(2+).

It localises to the cytoplasm. It carries out the reaction tRNA(Cys) + L-cysteine + ATP = L-cysteinyl-tRNA(Cys) + AMP + diphosphate. The sequence is that of Cysteine--tRNA ligase from Campylobacter fetus subsp. fetus (strain 82-40).